The primary structure comprises 784 residues: LPS-assembly protein LptD (784 aa).

A signal peptide spans M1–A24. Disulfide bonds link C31–C724 and C173–C725.

It belongs to the LptD family. As to quaternary structure, component of the lipopolysaccharide transport and assembly complex. Interacts with LptE and LptA. Post-translationally, contains two intramolecular disulfide bonds.

It is found in the cell outer membrane. In terms of biological role, together with LptE, is involved in the assembly of lipopolysaccharide (LPS) at the surface of the outer membrane. The chain is LPS-assembly protein LptD from Escherichia coli O6:K15:H31 (strain 536 / UPEC).